We begin with the raw amino-acid sequence, 436 residues long: MTTFSPREIVSELDRFIIGQKDAKRAVAIALRNRWRRQQLEGQMREEVMPKNILMIGPTGVGKTEISRRLARLAGAPFVKVEATKFTEVGYVGRDVEQIIRDLVEIAIGLVREKMREDVKARAHINAEERVLEALVGKTASPATRDSFRKKLRDGELDDKEIEIEVADTGNGGMPGFEIPGMPGANIGVLNINDMLSKAMGGKKTKSRKTTVKESYDLLVSDESDKLLDQDEVVRRALDATENDGIVFLDEIDKIAARSDISGGPSREGVQRDLLPLVEGTTVATKYGPVKTDHILFIASGAFHVSKPSDLLPELQGRLPIRVELRALEKQDFVRILTETEASLIKQYIALMKTEGVDLTFTDDAIDSLAGIAVDLNDSVENIGARRLQTVMERVLDEISYDAPDRNGTSVTIDAAYVEKHVGDLSRNTDLSRFIL.

Residues Ile-18, 60–65, Asp-250, Glu-314, and Arg-386 each bind ATP; that span reads GVGKTE.

The protein belongs to the ClpX chaperone family. HslU subfamily. In terms of assembly, a double ring-shaped homohexamer of HslV is capped on each side by a ring-shaped HslU homohexamer. The assembly of the HslU/HslV complex is dependent on binding of ATP.

It localises to the cytoplasm. In terms of biological role, ATPase subunit of a proteasome-like degradation complex; this subunit has chaperone activity. The binding of ATP and its subsequent hydrolysis by HslU are essential for unfolding of protein substrates subsequently hydrolyzed by HslV. HslU recognizes the N-terminal part of its protein substrates and unfolds these before they are guided to HslV for hydrolysis. This is ATP-dependent protease ATPase subunit HslU from Mesorhizobium japonicum (strain LMG 29417 / CECT 9101 / MAFF 303099) (Mesorhizobium loti (strain MAFF 303099)).